Reading from the N-terminus, the 521-residue chain is Ribonuclease Y (521 aa).

The chain crosses the membrane as a helical span at residues 3–23; it reads VSIWMLVITVLAAVAAYFAGS. One can recognise a KH domain in the interval 211–271; that stretch reads TVSVVPLPSD…VRREVARMSL (61 aa). Positions 337–430 constitute an HD domain; the sequence is IYQHSLEVAF…VQAADALSGA (94 aa).

Belongs to the RNase Y family.

The protein localises to the cell membrane. Endoribonuclease that initiates mRNA decay. The protein is Ribonuclease Y of Pelobacter propionicus (strain DSM 2379 / NBRC 103807 / OttBd1).